We begin with the raw amino-acid sequence, 761 residues long: Spindle assembly abnormal protein 4 (761 aa).

The segment covering 1-11 has biased composition (acidic residues); that stretch reads MLPSENGDEDQ. The tract at residues 1-109 is disordered; that stretch reads MLPSENGDED…SNERREEDNV (109 aa). Over residues 51–62 the composition is skewed to polar residues; it reads TPTNSAPSSART. A compositionally biased stretch (basic and acidic residues) spans 90 to 106; that stretch reads ESHDSGNRSESNERREE. The stretch at 129 to 156 forms a coiled coil; sequence ETCSKVSEEATQLRAEADRITAQANFIN. Residues 164-173 show a composition bias toward low complexity; it reads TPSSYSSNIS. Disordered stretches follow at residues 164-228 and 252-280; these read TPSS…QARP and PRRQPMLPAHHHPSQKENVPERKAPSEHV. A compositionally biased stretch (polar residues) spans 210–223; it reads QTLSSLASSGSLDT. Over residues 265-280 the composition is skewed to basic and acidic residues; that stretch reads SQKENVPERKAPSEHV. Residues 326 to 464 adopt a coiled-coil conformation; it reads RKKQEEAYAK…EKDDREKEMF (139 aa). The segment covering 479–497 has biased composition (low complexity); it reads ATGSAASSRLPSVSSLASS. The segment at 479–510 is disordered; sequence ATGSAASSRLPSVSSLASSMKTGSTGKGRTVS.

It localises to the cytoplasm. Its subcellular location is the cytoskeleton. The protein resides in the microtubule organizing center. The protein localises to the centrosome. Functionally, required for centrosome duplication. Plays a central role in determining centrosome size. The sequence is that of Spindle assembly abnormal protein 4 (sas-4) from Caenorhabditis briggsae.